The chain runs to 212 residues: Cell division protein SepF (212 aa).

The interval Arg32–Glu104 is disordered. Residues Glu64–Gly73 are compositionally biased toward acidic residues.

Belongs to the SepF family. Homodimer. Interacts with FtsZ.

It is found in the cytoplasm. Its function is as follows. Cell division protein that is part of the divisome complex and is recruited early to the Z-ring. Probably stimulates Z-ring formation, perhaps through the cross-linking of FtsZ protofilaments. Its function overlaps with FtsA. The protein is Cell division protein SepF of Saccharopolyspora erythraea (strain ATCC 11635 / DSM 40517 / JCM 4748 / NBRC 13426 / NCIMB 8594 / NRRL 2338).